Here is a 165-residue protein sequence, read N- to C-terminus: Nucleotide-binding protein Rcas_1283 (165 aa).

The protein belongs to the YajQ family.

In terms of biological role, nucleotide-binding protein. The protein is Nucleotide-binding protein Rcas_1283 of Roseiflexus castenholzii (strain DSM 13941 / HLO8).